Reading from the N-terminus, the 163-residue chain is Nucleotide-binding protein MAV_4575 (163 aa).

The protein belongs to the YajQ family.

Its function is as follows. Nucleotide-binding protein. The chain is Nucleotide-binding protein MAV_4575 from Mycobacterium avium (strain 104).